We begin with the raw amino-acid sequence, 41 residues long: Large ribosomal subunit protein bL36 (41 aa).

Belongs to the bacterial ribosomal protein bL36 family.

The polypeptide is Large ribosomal subunit protein bL36 (Granulibacter bethesdensis (strain ATCC BAA-1260 / CGDNIH1)).